Reading from the N-terminus, the 310-residue chain is tRNA dimethylallyltransferase (310 aa).

14–21 is a binding site for ATP; sequence GPTASGKT. 16–21 serves as a coordination point for substrate; that stretch reads TASGKT. Interaction with substrate tRNA regions lie at residues 39–42, 163–167, and 244–249; these read DSAL, QRLSR, and RCVGYR.

This sequence belongs to the IPP transferase family. As to quaternary structure, monomer. It depends on Mg(2+) as a cofactor.

The catalysed reaction is adenosine(37) in tRNA + dimethylallyl diphosphate = N(6)-dimethylallyladenosine(37) in tRNA + diphosphate. Catalyzes the transfer of a dimethylallyl group onto the adenine at position 37 in tRNAs that read codons beginning with uridine, leading to the formation of N6-(dimethylallyl)adenosine (i(6)A). The polypeptide is tRNA dimethylallyltransferase (Tolumonas auensis (strain DSM 9187 / NBRC 110442 / TA 4)).